The chain runs to 261 residues: Zinc import ATP-binding protein ZnuC (261 aa).

The ABC transporter domain maps to 5 to 220 (ISLKALSVTF…PSYIALFGSA (216 aa)). 37-44 (GPNGAGKS) contributes to the ATP binding site. The disordered stretch occupies residues 236-261 (HHDLAGQPVSGDATQCNHHHHGHHHD). The segment covering 252–261 (NHHHHGHHHD) has biased composition (basic residues).

It belongs to the ABC transporter superfamily. Zinc importer (TC 3.A.1.15.5) family. The complex is composed of two ATP-binding proteins (ZnuC), two transmembrane proteins (ZnuB) and a solute-binding protein (ZnuA).

The protein resides in the cell inner membrane. It catalyses the reaction Zn(2+)(out) + ATP(in) + H2O(in) = Zn(2+)(in) + ADP(in) + phosphate(in) + H(+)(in). Its function is as follows. Part of the ABC transporter complex ZnuABC involved in zinc import. Responsible for energy coupling to the transport system. The protein is Zinc import ATP-binding protein ZnuC of Vibrio vulnificus (strain CMCP6).